Here is a 98-residue protein sequence, read N- to C-terminus: Co-chaperonin GroES (98 aa).

Belongs to the GroES chaperonin family. Heptamer of 7 subunits arranged in a ring. Interacts with the chaperonin GroEL.

The protein localises to the cytoplasm. Together with the chaperonin GroEL, plays an essential role in assisting protein folding. The GroEL-GroES system forms a nano-cage that allows encapsulation of the non-native substrate proteins and provides a physical environment optimized to promote and accelerate protein folding. GroES binds to the apical surface of the GroEL ring, thereby capping the opening of the GroEL channel. The chain is Co-chaperonin GroES from Rhizobium leguminosarum bv. trifolii (strain WSM2304).